A 114-amino-acid polypeptide reads, in one-letter code: Superoxide dismutase [Cu-Zn] (114 aa).

Positions 37, 39, and 54 each coordinate Cu cation. Histidine 54, histidine 62, histidine 71, and aspartate 74 together coordinate Zn(2+). The tract at residues 54–80 (HFNPGNKEHGAPTDGNRHLGDLGNIQA) is disordered. Positions 59 to 73 (NKEHGAPTDGNRHLG) are enriched in basic and acidic residues. Histidine 111 contacts Cu cation.

Belongs to the Cu-Zn superoxide dismutase family. As to quaternary structure, homodimer. The cofactor is Cu cation. Zn(2+) is required as a cofactor.

The protein localises to the cytoplasm. It carries out the reaction 2 superoxide + 2 H(+) = H2O2 + O2. Functionally, destroys radicals which are normally produced within the cells and which are toxic to biological systems. In Drosophila tolteca (Fruit fly), this protein is Superoxide dismutase [Cu-Zn].